The primary structure comprises 194 residues: MQFVPIKDAPGYLVNEAGDVFSTFTNKVLSRYIVDGYPAVKLQINGKQTSVLIHRIISHVFGDLYNLFDPELEVDHKDRDRLNLSKDNLQVLSKIEHQRKTNKDNGWSDSRVPCPLCGSLMLQRSVTCTNCKPKPTGRLIKPELSLDDITEKVLLMGWVKAAKELEVSESTLRRRYTKLTGLSPKVLTEQRKSK.

Its function is as follows. Endonuclease that cleaves only one strand of asymmetric DNA substrates thereby introducing interruptions into the template or coding strand. This chain is H-N-H endonuclease F-TflI, found in Escherichia coli (Enterobacteria phage T5).